A 464-amino-acid polypeptide reads, in one-letter code: Fumarate hydratase class II (464 aa).

Substrate is bound by residues 98–100, 129–132, 139–141, and Thr187; these read SGT, HPND, and SSN. The Proton donor/acceptor role is filled by His188. Residue Ser318 is part of the active site. Residues Ser319 and 324–326 each bind substrate; that span reads KVN.

Belongs to the class-II fumarase/aspartase family. Fumarase subfamily. As to quaternary structure, homotetramer.

It is found in the cytoplasm. The enzyme catalyses (S)-malate = fumarate + H2O. Its pathway is carbohydrate metabolism; tricarboxylic acid cycle; (S)-malate from fumarate: step 1/1. Functionally, involved in the TCA cycle. Catalyzes the stereospecific interconversion of fumarate to L-malate. The sequence is that of Fumarate hydratase class II from Wigglesworthia glossinidia brevipalpis.